The chain runs to 429 residues: Argininosuccinate lyase (429 aa).

It belongs to the lyase 1 family. Argininosuccinate lyase subfamily.

It is found in the cytoplasm. It carries out the reaction 2-(N(omega)-L-arginino)succinate = fumarate + L-arginine. The protein operates within amino-acid biosynthesis; L-arginine biosynthesis; L-arginine from L-ornithine and carbamoyl phosphate: step 3/3. The protein is Argininosuccinate lyase of Pyrobaculum islandicum (strain DSM 4184 / JCM 9189 / GEO3).